The following is a 170-amino-acid chain: Adenine phosphoribosyltransferase (170 aa).

This sequence belongs to the purine/pyrimidine phosphoribosyltransferase family. As to quaternary structure, homodimer.

The protein resides in the cytoplasm. It catalyses the reaction AMP + diphosphate = 5-phospho-alpha-D-ribose 1-diphosphate + adenine. Its pathway is purine metabolism; AMP biosynthesis via salvage pathway; AMP from adenine: step 1/1. Catalyzes a salvage reaction resulting in the formation of AMP, that is energically less costly than de novo synthesis. This is Adenine phosphoribosyltransferase from Thermotoga neapolitana (strain ATCC 49049 / DSM 4359 / NBRC 107923 / NS-E).